The primary structure comprises 376 residues: Zinc transporter 7 (376 aa).

Residues 1–37 (MLPLSIKDDEYKPPKFNLFRKISGWFRSILSDKTSRN) lie on the Cytoplasmic side of the membrane. The helical transmembrane segment at 38–58 (LFFFLCLNLSFAFVELLYGIW) threads the bilayer. The Lumenal segment spans residues 59 to 67 (SNCLGLISD). The chain crosses the membrane as a helical span at residues 68–88 (SFHMFFDSTAILAGLAASVIS). Residues 89 to 102 (KWRDNDAFSYGYVR) lie on the Cytoplasmic side of the membrane. A helical transmembrane segment spans residues 103-123 (AEVLAGFVNGLFLIFTAFFIF). Topologically, residues 124–140 (SEGVERALAPPDVHHER) are lumenal. Residues 141–161 (LLLVSILGFVVNLVGIFVFKH) traverse the membrane as a helical segment. Positions 161 to 218 (HGGHGHSHGSGHGHSHSLFNGALDQTHGHGDHCHSHELKHGAAHSHDHAHGHGHFHSH) are his-rich loop. The Cytoplasmic portion of the chain corresponds to 162–236 (GGHGHSHGSG…TGPSRQILQG (75 aa)). Residues 188 to 222 (GHGDHCHSHELKHGAAHSHDHAHGHGHFHSHDGPS) are compositionally biased toward basic and acidic residues. A disordered region spans residues 188–226 (GHGDHCHSHELKHGAAHSHDHAHGHGHFHSHDGPSLKET). Residues 237 to 257 (VFLHILADTLGSIGVIASAIM) traverse the membrane as a helical segment. The Lumenal segment spans residues 258 to 262 (MQNFG). Residues 263-283 (LMIADPICSILIAMLIVISVI) form a helical membrane-spanning segment. Residues 284-376 (PLLRESVGIL…LYVQIDFAAM (93 aa)) are Cytoplasmic-facing.

This sequence belongs to the cation diffusion facilitator (CDF) transporter (TC 2.A.4) family. SLC30A subfamily. Homooligomer.

It localises to the golgi apparatus membrane. The protein resides in the cytoplasmic vesicle. The protein localises to the golgi apparatus. Its subcellular location is the trans-Golgi network. It is found in the sarcoplasmic reticulum. It localises to the mitochondrion. The enzyme catalyses Zn(2+)(in) = Zn(2+)(out). Functionally, zinc ion transporter mediating zinc entry from the cytosol into the lumen of organelles along the secretory pathway. By contributing to zinc ion homeostasis within the early secretory pathway, regulates the activation and folding of enzymes like alkaline phosphatases. The sequence is that of Zinc transporter 7 (SLC30A7) from Bos taurus (Bovine).